The primary structure comprises 867 residues: Dynamin-1 (867 aa).

In terms of domain architecture, Dynamin-type G spans 28–294; it reads DLDLPQIAVV…LTNHIRDTLP (267 aa). Residues 38 to 45 form a G1 motif region; it reads GGQSAGKS. 7 residues coordinate GDP: S41, G43, K44, S45, S46, R59, and G60. The interval 64 to 66 is G2 motif; that stretch reads VTR. Y80 bears the Phosphotyrosine mark. Position 125 is a 3'-nitrotyrosine; alternate (Y125). Position 125 is a phosphotyrosine; alternate (Y125). Positions 136–139 are G3 motif; the sequence is DLPG. Residues 205 to 208 are G4 motif; that stretch reads TKLD. 6 residues coordinate GDP: K206, D208, D211, N236, R237, and Q239. Residues 235 to 238 form a G5 motif region; the sequence is VNRS. S306 and S347 each carry phosphoserine. Y354 bears the Phosphotyrosine mark. The residue at position 512 (S512) is a Phosphoserine. In terms of domain architecture, PH spans 515–625; that stretch reads QDEILVIRKG…WKASFLRAGV (111 aa). The GED domain maps to 659–750; sequence VETIRNLVDS…IIGDINTTTV (92 aa). A disordered region spans residues 767–867; the sequence is SVPAGRRSPT…HENRAGKARL (101 aa). 2 positions are modified to phosphoserine: S774 and S778. Position 796 is an omega-N-methylarginine (R796). S822 is modified (phosphoserine). Pro residues predominate over residues 825–843; it reads PFGPPPQVPSRPNRAPPGV. Phosphoserine occurs at positions 847, 851, and 857. The span at 856 to 867 shows a compositional bias: basic and acidic residues; sequence GKHENRAGKARL.

The protein belongs to the TRAFAC class dynamin-like GTPase superfamily. Dynamin/Fzo/YdjA family. Homodimer; homodimerization is mediated by the dynamin-type G domain which promotes assembly-stimulated GTPase activity. Homo-tetramer formed from two dimers in the absence of lipid. Oligomerizes into a helical polymer that self-assembles around the vesicle membrane, when associated to the menbrane through lipid binding. Interacts (via C-terminal proline-rich domain (PRD)) with SNX9 (via SH3 domain); this interaction allows regulation of DNM1 self-assembly during late stages of endocytic vesicle formation and supports DNM1's early functions in accelerating clathrin-coated pits (CCPs) maturation in non neuronals cell. Interacts (via C-terminal proline-rich domain (PRD)) with MYO1E (via SH3 domain); this interaction regulates receptor-mediated endocytosis. Interacts with SNX33 (via SH3 domain); this interaction decreases DNM1-dependent endocytosis. Interacts with DIAPH1. Interacts with GRB2 (via SH3 domain); this interaction mediates disassembly of DNM1 polymers, therefore modulates self-assembly. Forms a complex with BIN1 (via SH3 domain) and SH3GL2 (via SH3 domain). Forms a complex with SH3GL2 (via SH3 domain) and AMPH (via SH3 domain). Forms a complex with SH3GL2 (via SH3 domain) and SYNJ1. Interacts (via C-terminal proline-rich domain (PRD)) with SYT1; this interaction facilitates vesicle fission during clathrin-mediated endocytosis (CME). Interacts (via C-terminal proline-rich domain (PRD)) with PLCG1 (via SH3 domain); this interaction stimulates the release of GDP from DNM1 and enhances DNM1-dependent endocytosis. Interacts with SNPH; this interaction inhibits the binding of DNM1 to AMPH and DNM1-receptor-mediated endocytosis. Interacts with CAV1. Interacts with SH3GLB1 (via SH3 domain). Interacts with PACSIN1 (via SH3 domain), PACSIN2 (via SH3 domain) and PACSIN3 (via SH3 domain). Interacts with UNC119; this interaction decreases DNM1's GTPase activity and affects DNM1's interaction with AMPH. Interacts with AMPH. Interacts (GTP-bound form) with DNAJC6; this interaction allows clathrin-coated vesicle (CCV) formation at the plasma membrane. Phosphorylation at Ser-774 by GSK3B/GSK3-beta leads to inactivation of receptor-mediated endocytosis in non-neuronal cells. Dephosphorylation at Ser-774, through the EGFR downstream signaling, leads to activation and regulates early stages of clathrin-mediated endocytosis (CME). Phosphorylated on Tyr in response to EGF stimulation in cells expressing truncated EGFR. Phosphorylated by CDK5 leading to synaptic vesicle endocytosis (SVE) activation. Expressed exclusively in the brain.

Its subcellular location is the cell membrane. It is found in the membrane. The protein localises to the clathrin-coated pit. It localises to the cytoplasmic vesicle. The protein resides in the presynapse. Its subcellular location is the secretory vesicle. It is found in the chromaffin granule. It catalyses the reaction GTP + H2O = GDP + phosphate + H(+). Its function is as follows. Catalyzes the hydrolysis of GTP and utilizes this energy to mediate vesicle scission and participates in many forms of endocytosis, such as clathrin-mediated endocytosis or synaptic vesicle endocytosis as well as rapid endocytosis (RE). Associates to the membrane, through lipid binding, and self-assembles into rings and stacks of interconnected rings through oligomerization to form a helical polymer around the vesicle membrane leading to constriction of invaginated coated pits around their necks. Self-assembly of the helical polymer induces membrane tubules narrowing until the polymer reaches a length sufficient to trigger GTP hydrolysis. Depending on the curvature imposed on the tubules, membrane detachment from the helical polymer upon GTP hydrolysis can cause spontaneous hemifission followed by complete fission. May play a role in regulating early stages of clathrin-mediated endocytosis in non-neuronal cells through its activation by dephosphorylation via the signaling downstream of EGFR. Controls vesicle size at a step before fission, during formation of membrane pits, at hippocampal synapses. Controls plastic adaptation of the synaptic vesicle recycling machinery to high levels of activity. Mediates rapid endocytosis (RE), a Ca(2+)-dependent and clathrin- and K(+)-independent process in chromaffin cells. Microtubule-associated force-producing protein involved in producing microtubule bundles and able to bind and hydrolyze GTP. Through its interaction with DNAJC6, acts during the early steps of clathrin-coated vesicle (CCV) formation. The chain is Dynamin-1 from Mus musculus (Mouse).